Reading from the N-terminus, the 1030-residue chain is Tricorn protease (1030 aa).

Positions 1–270 are six-bladed beta propeller; the sequence is MANLLQNPDI…DNVKSLDIGP (270 aa). Residues 93-94 form a binds the substrate's C-terminus region; it reads RR. The tract at residues 286 to 635 is seven-bladed beta propeller; sequence LEDFSMSPGD…EEEKSLNIDA (350 aa). Residues 641–712 are C-1; the sequence is NVKEDFAEMY…RTSHSYEMGG (72 aa). His-706 functions as the Charge relay system in the catalytic mechanism. The tract at residues 721-816 is PDZ-like; the sequence is RAGRIACDFK…SGFVDVLQDD (96 aa). The C-2 stretch occupies residues 817-1022; sequence RYIRYRAWVE…IEMVLADLEK (206 aa). 877 to 879 contributes to the substrate binding site; it reads GGG. Ser-926 serves as the catalytic Nucleophile. Position 954-956 (954-956) interacts with substrate; that stretch reads GIS. The Charge relay system role is filled by Glu-984.

This sequence belongs to the peptidase S41B family. In terms of assembly, part of the tricorn proteolytic complex.

It localises to the cytoplasm. Tricorn degrades oligopeptides in a sequential manner. The sequence is that of Tricorn protease (tri) from Thermoplasma volcanium (strain ATCC 51530 / DSM 4299 / JCM 9571 / NBRC 15438 / GSS1).